The primary structure comprises 358 residues: Protein-arginine kinase (358 aa).

The 232-residue stretch at 24–255 (IVLSSRIRLA…KQLIRQERVA (232 aa)) folds into the Phosphagen kinase C-terminal domain. Residues 27 to 31 (SSRIR), histidine 92, arginine 126, 177 to 181 (RASVM), and 208 to 213 (RGIYGE) contribute to the ATP site. The RDXXRA motif of the pArg binding pocket involved in allosteric regulation signature appears at 338–343 (RDERRA).

Belongs to the ATP:guanido phosphotransferase family.

The catalysed reaction is L-arginyl-[protein] + ATP = N(omega)-phospho-L-arginyl-[protein] + ADP + H(+). With respect to regulation, appears to be allosterically activated by the binding of pArg-containing polypeptides to the pArg-binding pocket localized in the C-terminal domain of McsB. Its function is as follows. Catalyzes the specific phosphorylation of arginine residues in a large number of proteins. Is part of the bacterial stress response system. Protein arginine phosphorylation has a physiologically important role and is involved in the regulation of many critical cellular processes, such as protein homeostasis, motility, competence, and stringent and stress responses, by regulating gene expression and protein activity. This chain is Protein-arginine kinase, found in Shouchella clausii (strain KSM-K16) (Alkalihalobacillus clausii).